Consider the following 522-residue polypeptide: FAD-dependent monooxygenase fsr3 (522 aa).

The interval 1–27 (MKNTQTNGTHPIIDKKPNGTLNGDHQE) is disordered. FAD is bound at residue arginine 164. The active site involves arginine 245. Residues aspartate 369 and alanine 382 each coordinate FAD.

This sequence belongs to the paxM FAD-dependent monooxygenase family. FAD serves as cofactor.

The protein operates within polyketide biosynthesis. In terms of biological role, FAD-dependent monooxygenase; part of the gene cluster that mediates the biosynthesis of fusarubins, highly pigmented naphthoquinones responsible for the coloration of the fruiting bodies. The non-reducing polyketide synthase FSR1 is responsible for the condensation of seven acetyl-CoA units to yield a haptaketide. After rings A and B are formed by aldol-type cyclization, the PKS-derived product is released as 6-O-demethylfusarubinaldehyde. Then, two hydroxyl groups at C-5 and C-10 are incorporated by FSR3, and simultaneously hydroxyl groups at C-6 and C-8 are methylated by FSR2. The aldehyde is, on the one hand, reduced by FSR3 to 8-O-methylfusarubin alcohol, which equilibrates mainly with 8-O-methylfusarubin and only small amounts of 8-O-methylnectriafurone. On the other hand, the aldehyde can be oxidized to form 8-O-methylfusarubinic acid, a reaction driven by FSR3 equilibrating with 8-O-methylfusarubinlactone, finally resulting in 8-O-methylanhydrofusarubinlactol after a further reduction step and loss of water. 8-O-Methylfusarubinic acid can also undergo decarboxylation, resulting in 8-O-methyl-13-hydroxynorjavanicin after another hydroxylation step at C-13. Both steps are most likely also accomplished by FSR3. No enzymatic function has been determined so far for either FSR4 and FSR5. Their deletion does not alter the product spectrum, but the possibility that they catalyze specific enzymatic steps during perithecium development cannot be ruled out. FSR4 might possess a regulatory function in the biosynthesis of fusarubins. This Gibberella fujikuroi (strain CBS 195.34 / IMI 58289 / NRRL A-6831) (Bakanae and foot rot disease fungus) protein is FAD-dependent monooxygenase fsr3.